The primary structure comprises 24 residues: Glutathione S-transferase (24 aa).

The protein belongs to the GST superfamily. Monomer and homodimer.

It localises to the cytoplasm. The catalysed reaction is RX + glutathione = an S-substituted glutathione + a halide anion + H(+). Functionally, conjugation of reduced glutathione to a wide number of exogenous and endogenous hydrophobic electrophiles. This chain is Glutathione S-transferase, found in Pseudomonas sp. (strain CF600).